A 205-amino-acid chain; its full sequence is DNA-directed RNA polymerases IV and V subunit 4 (205 aa).

The interval 1 to 79 is disordered; the sequence is MSEKGGKGLK…TKSSKNSLHS (79 aa). The span at 48–60 shows a compositional bias: polar residues; sequence NVSSDQQPFQSSA.

It belongs to the eukaryotic RPB4 RNA polymerase subunit family. As to quaternary structure, component of the RNA polymerase IV and V complexes. Interacts with NRPD1 and NRPE1. In terms of tissue distribution, expressed in shoot meristematic region and in root tips. Detected in cotyledons, flowers and young leaves.

It localises to the nucleus. DNA-dependent RNA polymerase catalyzes the transcription of DNA into RNA using the four ribonucleoside triphosphates as substrates. Component of RNA polymerases IV and V which mediate short-interfering RNAs (siRNA) accumulation and subsequent RNA-directed DNA methylation-dependent (RdDM) transcriptional gene silencing (TGS) of endogenous repeated sequences, including transposable elements. Required for the de novo DNA methylation directed by the RdDM pathway. The sequence is that of DNA-directed RNA polymerases IV and V subunit 4 (NRPD4) from Arabidopsis thaliana (Mouse-ear cress).